Reading from the N-terminus, the 210-residue chain is Putative 4-hydroxy-4-methyl-2-oxoglutarate aldolase (210 aa).

Residues 87-90 and arginine 109 contribute to the substrate site; that span reads GDFV. An a divalent metal cation-binding site is contributed by aspartate 110.

Belongs to the class II aldolase/RraA-like family. Homotrimer. It depends on a divalent metal cation as a cofactor.

The enzyme catalyses 4-hydroxy-4-methyl-2-oxoglutarate = 2 pyruvate. It carries out the reaction oxaloacetate + H(+) = pyruvate + CO2. Functionally, catalyzes the aldol cleavage of 4-hydroxy-4-methyl-2-oxoglutarate (HMG) into 2 molecules of pyruvate. Also contains a secondary oxaloacetate (OAA) decarboxylase activity due to the common pyruvate enolate transition state formed following C-C bond cleavage in the retro-aldol and decarboxylation reactions. The polypeptide is Putative 4-hydroxy-4-methyl-2-oxoglutarate aldolase (Halalkalibacterium halodurans (strain ATCC BAA-125 / DSM 18197 / FERM 7344 / JCM 9153 / C-125) (Bacillus halodurans)).